Reading from the N-terminus, the 189-residue chain is Elongation factor P (189 aa).

This sequence belongs to the elongation factor P family.

Its subcellular location is the cytoplasm. It functions in the pathway protein biosynthesis; polypeptide chain elongation. Its function is as follows. Involved in peptide bond synthesis. Stimulates efficient translation and peptide-bond synthesis on native or reconstituted 70S ribosomes in vitro. Probably functions indirectly by altering the affinity of the ribosome for aminoacyl-tRNA, thus increasing their reactivity as acceptors for peptidyl transferase. The polypeptide is Elongation factor P (Ehrlichia canis (strain Jake)).